Consider the following 556-residue polypeptide: Double-strand-break repair protein rad21-like protein 1 (556 aa).

Belongs to the rad21 family. As to quaternary structure, component of some meiotic cohesin complex composed of the SMC1 (SMC1A or SMC1B) and SMC3 heterodimer attached via their hinge domain, RAD21L which link them, and STAG3.

The protein localises to the nucleus. It localises to the chromosome. Its function is as follows. Meiosis-specific component of some cohesin complex required during the initial steps of prophase I in male meiosis. Probably required during early meiosis in males for separation of sister chromatids and homologous chromosomes. Replaces RAD21 in premeiotic S phase (during early stages of prophase I), while RAD21 reappears in later stages of prophase I. Involved in synaptonemal complex assembly, synapsis initiation and crossover recombination between homologous chromosomes during prophase I. This Homo sapiens (Human) protein is Double-strand-break repair protein rad21-like protein 1 (RAD21L1).